The sequence spans 122 residues: Fluoride-specific ion channel FluC (122 aa).

A run of 4 helical transmembrane segments spans residues 1–21 (MYAFFTIFIGGGLGAVSRHYL), 35–55 (WAILLINLLGCLGIGFFSAYL), 67–87 (FLLTGFLGGFTTYSTFTLNLI), and 98–118 (FLNLFLHLGGGILCCFVGFWL). 2 residues coordinate Na(+): G74 and T77.

It belongs to the fluoride channel Fluc/FEX (TC 1.A.43) family.

It localises to the cell inner membrane. The catalysed reaction is fluoride(in) = fluoride(out). Na(+) is not transported, but it plays an essential structural role and its presence is essential for fluoride channel function. Its function is as follows. Fluoride-specific ion channel. Important for reducing fluoride concentration in the cell, thus reducing its toxicity. This chain is Fluoride-specific ion channel FluC, found in Dichelobacter nodosus (strain VCS1703A).